A 129-amino-acid polypeptide reads, in one-letter code: Putative protein p14 (129 aa).

In Acyrthosiphon pisum secondary endosymbiont phage 1 (Bacteriophage APSE-1), this protein is Putative protein p14 (14).